Reading from the N-terminus, the 333-residue chain is Torsin-1A (333 aa).

Residues 1–20 (MKLGRATLALLLLVPCVVRA) form the signal peptide. The interval 92–252 (KPKKPLTLSL…VSVFNNKNSG (161 aa)) is interaction with SNAPIN. N-linked (GlcNAc...) asparagine glycans are attached at residues Asn-144 and Asn-159. The tract at residues 252-333 (GFWHSSLIDR…FTKLDYYLDD (82 aa)) is interaction with KLC1. The segment at 313–333 (KVFSDKGCKTVFTKLDYYLDD) is interaction with SYNE3.

Belongs to the ClpA/ClpB family. Torsin subfamily. Homohexamer. Interacts with TOR1B; the interaction may be specific of neural tissues. Interacts (ATP-bound) with TOR1AIP1 and TOR1AIP2; the interactions induce ATPase activity. Interacts with KLHL14; preferentially when ATP-free. Interacts with KLC1 (via TPR repeats); the interaction associates TOR1A with the kinesin oligomeric complex. Interacts with COPS4; the interaction associates TOR1A with the CSN complex. Interacts with SNAPIN; the interaction is direct and associates SNAPIN with the CSN complex. Interacts with STON2. Interacts (ATP-bound) with SYNE3 (via KASH domain); the interaction is required for SYNE3 nuclear envelope localization. Interacts with VIM; the interaction associates TOR1A with the cytoskeleton. Interacts with PLEC. Interacts (ATP-bound) with SLC6A3; regulates SLC6A3 transport to the plasma membrane. In terms of processing, N-glycosylated. As to expression, expressed in brain (at protein level).

The protein localises to the endoplasmic reticulum lumen. It is found in the nucleus inner membrane. The protein resides in the cell projection. Its subcellular location is the growth cone. It localises to the cytoplasmic vesicle membrane. The protein localises to the cytoplasmic vesicle. It is found in the secretory vesicle. The protein resides in the synaptic vesicle. It catalyses the reaction ATP + H2O = ADP + phosphate + H(+). Functionally, protein with chaperone functions important for the control of protein folding, processing, stability and localization as well as for the reduction of misfolded protein aggregates. Involved in the regulation of synaptic vesicle recycling, controls STON2 protein stability in collaboration with the COP9 signalosome complex (CSN). In the nucleus, may link the cytoskeleton with the nuclear envelope, this mechanism seems to be crucial for the control of nuclear polarity, cell movement and, specifically in neurons, nuclear envelope integrity. Participates in the cellular trafficking and may regulate the subcellular location of multipass membrane proteins such as the dopamine transporter SLC6A3, leading to the modulation of dopamine neurotransmission. In the endoplasmic reticulum, plays a role in the quality control of protein folding by increasing clearance of misfolded proteins such as SGCE variants or holding them in an intermediate state for proper refolding. May have a redundant function with TOR1B in non-neural tissues. The chain is Torsin-1A (Tor1a) from Rattus norvegicus (Rat).